The following is a 104-amino-acid chain: Large ribosomal subunit protein bL21 (104 aa).

Residues Lys-78–Arg-91 are compositionally biased toward basic residues. The interval Lys-78–Ala-104 is disordered.

The protein belongs to the bacterial ribosomal protein bL21 family. As to quaternary structure, part of the 50S ribosomal subunit. Contacts protein L20.

Its function is as follows. This protein binds to 23S rRNA in the presence of protein L20. The protein is Large ribosomal subunit protein bL21 of Methylobacterium radiotolerans (strain ATCC 27329 / DSM 1819 / JCM 2831 / NBRC 15690 / NCIMB 10815 / 0-1).